A 339-amino-acid chain; its full sequence is Thymidine kinase (339 aa).

11-18 (GAFGIGKT) serves as a coordination point for ATP. Glu39 (proton acceptor) is an active-site residue. Residues Tyr59 and Gln83 each coordinate substrate. Residue Arg176 coordinates ATP. Substrate is bound at residue Arg182.

Belongs to the herpesviridae thymidine kinase family. In terms of assembly, homodimer.

It carries out the reaction thymidine + ATP = dTMP + ADP + H(+). Functionally, catalyzes the transfer of the gamma-phospho group of ATP to thymidine to generate dTMP in the salvage pathway of pyrimidine synthesis. The dTMP serves as a substrate for DNA polymerase during viral DNA replication. Allows the virus to be reactivated and to grow in non-proliferative cells lacking a high concentration of phosphorylated nucleic acid precursors. This is Thymidine kinase from Amazona oratrix (yellow-headed parrot).